Here is a 483-residue protein sequence, read N- to C-terminus: MKHIVKNIHFVGIGGAGMSGIAEVLLNLGYRVTGSDLGSSATTQRLATLGATIMQGHAPEHVIGANAVVVSTAVRGDNPEVLAARAKRIPIVPRAVMLAELMRLKQGIAIAGTHGKTTTTSLVASVLAEGGLDPTFVIGGRLNSAGANARLGTGDFIVAEADESDASFLNLFPVIEVITNIDADHMDTYGHDFARLKQAFIEFTQRLPFYGIAVLCVDDPNVREILPFVSKPVVRYGFAEDAQVRAVNARAVDGRMEFTVIRQLNGHAEPPLSITLNLPGLHNVQNALAAIAIATELEVPDEAIVKALAEFNGVGRRFQRYGEVPTADGKGHFTLIDDYGHHPVEMAATLAAARGAFPDRRLVLSFQPHRFTRTRDCFEDFVKVLGTVDALLLAEVYAAGEPPIIAADGRALTRALRVANKIEPVFVEQIEDMPQAILDAAQDGDVVITMGAGSIGQVPGQVVALQAQARTANVVDLNGGAAA.

Position 112-118 (glycine 112–threonine 118) interacts with ATP.

The protein belongs to the MurCDEF family.

It is found in the cytoplasm. The enzyme catalyses UDP-N-acetyl-alpha-D-muramate + L-alanine + ATP = UDP-N-acetyl-alpha-D-muramoyl-L-alanine + ADP + phosphate + H(+). It functions in the pathway cell wall biogenesis; peptidoglycan biosynthesis. In terms of biological role, cell wall formation. The protein is UDP-N-acetylmuramate--L-alanine ligase of Ralstonia pickettii (strain 12J).